The following is a 586-amino-acid chain: 2-succinyl-5-enolpyruvyl-6-hydroxy-3-cyclohexene-1-carboxylate synthase (586 aa).

Belongs to the TPP enzyme family. MenD subfamily. As to quaternary structure, homodimer. The cofactor is Mg(2+). Requires Mn(2+) as cofactor. Thiamine diphosphate is required as a cofactor.

It catalyses the reaction isochorismate + 2-oxoglutarate + H(+) = 5-enolpyruvoyl-6-hydroxy-2-succinyl-cyclohex-3-ene-1-carboxylate + CO2. It functions in the pathway quinol/quinone metabolism; 1,4-dihydroxy-2-naphthoate biosynthesis; 1,4-dihydroxy-2-naphthoate from chorismate: step 2/7. The protein operates within quinol/quinone metabolism; menaquinone biosynthesis. In terms of biological role, catalyzes the thiamine diphosphate-dependent decarboxylation of 2-oxoglutarate and the subsequent addition of the resulting succinic semialdehyde-thiamine pyrophosphate anion to isochorismate to yield 2-succinyl-5-enolpyruvyl-6-hydroxy-3-cyclohexene-1-carboxylate (SEPHCHC). This is 2-succinyl-5-enolpyruvyl-6-hydroxy-3-cyclohexene-1-carboxylate synthase from Geobacillus thermodenitrificans (strain NG80-2).